The following is a 2415-amino-acid chain: METPKETAVESSGPKVLETAEEIQHRRAEVLNQYQRFKDRVAERGQKLEESYHYQVFRRDADDLEKWIMEKLEIAKDKTYEPTNIQGKYQKHESFVSEVQAKSRVLPELEEIREARFAEDHFAHEATKTHLKQLRLLWDLLLELTQEKSDVLLRALKFYQYSQECEDILEWVKEKEAIVTLVELGDDWERTEVLHKKFEEFQEELTARKGKVDRVNQYANECAQEKHPKLPEIKAKQDEVNAAWDRLWSLALKRRESLSNAADLQRFKRDVNEAIQWMEEKEPQLTSEDYGKDLVSSEALFHNHKRLERNLAVMDDKVKELCAKADKLMISHSADAPQIQQMKLDLVSNWERIRALATNRYAKLKASYGYHRFLSDYDELSGWMKEKTALINADELPTDVASGEALLARHQQHKHEIDSYDDRFQSADATGQELLDGNHEASEEIREKMTILANDWAALLELWDKCQHQYRQCLDFHLFYRDSEQVDSWMSRQEAFLENEDLGNSVGSVEALLQKHDDFEEAFTAQEEKIITLDETATKLIDNDHYDSENIAAIRDGLLARRDALRERAATRRKLLVDSQLLQQLYQDSDDLKTWINKKKKLADDDDYKDVQNLKSRVQKQQDFEEELAVNEIMLNNLEKTGQEMIEDGHYASEAVAARLSEVANLWKELLEATAQKGTQLYEANQLLQFENNAEDLKRWLEEVEWQVTSEDYGKGLADVQNLLRKHGLLESDVTARQNQVDTLTDMAAHFEEIGHPDSGDIRARQESLLSRFEALKEPLAIRKKKLIDLLKLQQICRDSEDEEAWIQETEPSAASTHLGKDLVAAKNLLNRHEVILADIASHEPRIQVITERGNKMVEEGHFAAEDIASRVESLNKNMESLHARAIRRENDLKANVQLQQYLADLHEAEAWIKEKEPIVDNKNYGADEEAAGALLKKHEAFLVDLNAFENSIKALRDQAEVCQQQQAAPVDEAGREARVIALYDFEARSRREVSMKKNDVLTLLSSINKDWWKVEADDHQGFVPAVYVRKLAPDELPGFPQHRQEEPVNIPQLQQQVETLYHSLLDRAEERRRRLLQRYNEFLLAYEAGDMLEWIQEKKTENTGVELDDVWELQKKFDEFQRDLKSNEPRLKDINKVADELLFEELLTPEGAHIRQELNTRWNSLKRLADEQYQLLSSAHAVEMFHREADDVKEQIDKKCRALNAADPGSDLLSVQALQRQHEVFERDIIPLGEKVTTLGETAERLCESHPDATEDLQKQRTELNEAWDTLQGLTSDRKESLNEAHKFFLFLSKASDLENWIKTIGGVISSPELAEDLTGTEILLERHQEHHDDIKREDPTFQALEDFGTELIDSGHRNRREIDNTLQNINSKRDNLEKSWENRKKMLDQCLELQLFRGKCDQVESWMVARENSLRSDDRDHLNSLQALMKKRDDLDKAITAQEGKISDLENVATRLIDNDHYAKEEIAARLQRVLDRWKALKEQLLTELGKLGDYADLKQFYRDLEDLEEWINEMLPIACDESYKDPTNIQRKYLKHQAFENEVNGRAEQVDGVINLGNSLIERRVCDGDEENMQEQLDKLKENWDYLLERTTDKGQKLNEASRQQRFNTSIRDFEFWLSEAEGLLAMKDQARDLTSAGNLLKKHQLLEAEMLAREDPLKDLNDLAQELISSGTFNIDQIEEKMNGVNERFENVQSLAAAHHEKLKETYALFQFFQDLDDEEAWIEEKLLRVSSQDYGRDLQSVQNLLKKHKRLEGELVAHEPAVQNVLDTAESLRDKAAVGKEEIQERLAQFVQHWEKLKELAKTRGVNLEESLEYLQFMENAEEEEAWLGEKCALVSRGDSGDTLAATQSLLKKHEALENDFAVHKNRVQDVCAQGEDILNKEETQNKDKISTKIQVLNEKTASLAKALAAWKSQLDDVHAFQQFNWKADVVESWIGEKEASLKTKSNGADLTAFLTLLAKHDTLDASLQSFQQERLSEIAELKDQLVAGEHSQAKAIEEQHAALLRHWEQLLEASRVHRQKLLEKQLPLQKAEELFMEFAHKASAFNNWCENAEEDLSEPVHCVSLNEIRQLQKEHEAFLASLAGAQEDFNYLLELDKQIKALNVPSSPYTWLTVDVLGRIWNHLPDIIKEREQELQKEEARQIKNFEMCQEFEQNASAFLQWIQETRAYFLDGSLLKETGTLESQLEANKRKQKEIQAMKRHLTKIEDLGDSMEEALILDIKYSTIGLAQQWDQLHQLGMRMQHNLEQQIQAKDTIGVSEETLKEFSTTYKHFDENLTGRLTHKEFRSCLRGLNYYLPMVEEGEPEPKFEKFLNAVDPGRKGYVSLEDYTSFLIDKESENIKTSDDIESAFQALAEGKAYITKEDMKQALTPEQVSFCTIHMQQYMDPRGRSQPAGYDYVGFTNSFFGN.

Spectrin repeat units follow at residues 52–152, 157–259, 263–365, 370–471, 475–576, 580–681, 686–787, 792–894, and 898–967; these read YHYQ…SDVL, KFYQ…ESLS, DLQR…AKLK, YHRF…HQYR, DFHL…RKLL, QLLQ…GTQL, QLLQ…KKKL, KLQQ…NDLK, and QLQQ…QQQQ. Serine 257 bears the Phosphoserine mark. Positions 975–1034 constitute an SH3 domain; the sequence is GREARVIALYDFEARSRREVSMKKNDVLTLLSSINKDWWKVEADDHQGFVPAVYVRKLAP. At serine 990 the chain carries Phosphoserine. 11 Spectrin repeats span residues 1085-1177, 1183-1285, 1287-1390, 1394-1489, 1499-1603, 1606-1709, 1712-1815, 1818-1921, 1924-2029, 2040-2142, and 2154-2254; these read LAYE…YQLL, VEMF…SLNE, HKFF…KMLD, ELQL…QLLT, DLKQ…KLNE, RQQR…KLKE, ALFQ…NLEE, EYLQ…SQLD, HAFQ…KLLE, LFME…QELQ, and MCQE…NLEQ. Serine 1972 carries the post-translational modification Phosphoserine. EF-hand domains are found at residues 2267–2302, 2310–2345, and 2347–2382; these read ETLKEFSTTYKHFDENLTGRLTHKEFRSCLRGLNYY, EPEPKFEKFLNAVDPGRKGYVSLEDYTSFLIDKESE, and IKTSDDIESAFQALAEGKAYITKEDMKQALTPEQVS. Ca(2+)-binding residues include aspartate 2280, asparagine 2282, threonine 2284, arginine 2286, glutamate 2291, aspartate 2323, tyrosine 2329, and aspartate 2334.

The protein belongs to the spectrin family. As to quaternary structure, composed of non-homologous chains, alpha and beta, which aggregate to form dimers, tetramers, and higher polymers. Interacts with FASLG. Interacts with BCAM.

It is found in the cytoplasm. It localises to the cytoskeleton. The protein resides in the cell cortex. Its function is as follows. Spectrin is the major constituent of the cytoskeletal network underlying the erythrocyte plasma membrane. It associates with band 4.1 and actin to form the cytoskeletal superstructure of the erythrocyte plasma membrane. This is Spectrin alpha chain, erythrocytic 1 (Spta1) from Mus musculus (Mouse).